Here is a 437-residue protein sequence, read N- to C-terminus: Enolase (437 aa).

Gln162 contacts (2R)-2-phosphoglycerate. The Proton donor role is filled by Glu204. 3 residues coordinate Mg(2+): Asp251, Glu297, and Asp324. (2R)-2-phosphoglycerate contacts are provided by Lys349, Arg378, Ser379, and Lys400. The Proton acceptor role is filled by Lys349.

Belongs to the enolase family. The cofactor is Mg(2+).

It is found in the cytoplasm. The protein localises to the secreted. It localises to the cell surface. It carries out the reaction (2R)-2-phosphoglycerate = phosphoenolpyruvate + H2O. The protein operates within carbohydrate degradation; glycolysis; pyruvate from D-glyceraldehyde 3-phosphate: step 4/5. Functionally, catalyzes the reversible conversion of 2-phosphoglycerate (2-PG) into phosphoenolpyruvate (PEP). It is essential for the degradation of carbohydrates via glycolysis. The chain is Enolase from Chlorobium chlorochromatii (strain CaD3).